We begin with the raw amino-acid sequence, 322 residues long: MSFKSQSIGIIGAPFSKGQPRGGVEEGPTALRKAGLLEKLKEQECDVKDYGDLCFADVPNDTPFQIVKNPRSVGKANQQLADVVAEIKKNGRTSLVLGGDHSMAIGSISGHARVHPDLCVIWVDAHTDINTPLTTTTGNLHGQPVSFLLKELKEKIPEVPGLSWVTPCLSAKDIVYIGLRDVDPAEHYILKTLGIKYFSMIEVDKLGIGKVMEEAFSYLLGRKKRPIHLSFDVDGLDPFFTPATGTPVHGGLSYREGIYITEEIYKTGLLSGLDIMEVNPSLGKTPEEVTRTVNTAVALVLACFGVAREGNHKPIDYLKPPK.

Positions 1 to 27 (MSFKSQSIGIIGAPFSKGQPRGGVEEG) are disordered. Position 7 is a phosphoserine (Ser-7). Lys-17 carries the post-translational modification N6-succinyllysine. A Phosphoserine modification is found at Ser-72. Lys-75 is subject to N6-succinyllysine. Positions 101, 124, 126, and 128 each coordinate Mn(2+). Substrate is bound by residues 126–130 (HTDIN) and 137–139 (TGN). Ser-163 is modified (phosphoserine). Asp-183 lines the substrate pocket. The residue at position 217 (Ser-217) is a Phosphoserine. Mn(2+) contacts are provided by Asp-232 and Asp-234. 2 residues coordinate substrate: Thr-246 and Glu-277.

The protein belongs to the arginase family. Homotrimer. Interacts with CMTM6. Requires Mn(2+) as cofactor.

The protein localises to the cytoplasm. It catalyses the reaction L-arginine + H2O = urea + L-ornithine. It participates in nitrogen metabolism; urea cycle; L-ornithine and urea from L-arginine: step 1/1. This is Arginase-1 (ARG1) from Sus scrofa (Pig).